The chain runs to 103 residues: Protein translation factor SUI1 homolog (103 aa).

This sequence belongs to the SUI1 family.

This Hyperthermus butylicus (strain DSM 5456 / JCM 9403 / PLM1-5) protein is Protein translation factor SUI1 homolog.